Reading from the N-terminus, the 374-residue chain is Chorismate synthase (374 aa).

Arg55 lines the NADP(+) pocket. FMN is bound by residues 132 to 134 (RGS), Gly293, 308 to 312 (KPTPS), and Arg335.

The protein belongs to the chorismate synthase family. Requires FMNH2 as cofactor.

It carries out the reaction 5-O-(1-carboxyvinyl)-3-phosphoshikimate = chorismate + phosphate. The protein operates within metabolic intermediate biosynthesis; chorismate biosynthesis; chorismate from D-erythrose 4-phosphate and phosphoenolpyruvate: step 7/7. Its function is as follows. Catalyzes the anti-1,4-elimination of the C-3 phosphate and the C-6 proR hydrogen from 5-enolpyruvylshikimate-3-phosphate (EPSP) to yield chorismate, which is the branch point compound that serves as the starting substrate for the three terminal pathways of aromatic amino acid biosynthesis. This reaction introduces a second double bond into the aromatic ring system. This is Chorismate synthase from Methanothermobacter thermautotrophicus (strain ATCC 29096 / DSM 1053 / JCM 10044 / NBRC 100330 / Delta H) (Methanobacterium thermoautotrophicum).